The following is a 378-amino-acid chain: Outer membrane porin C (378 aa).

A signal peptide spans 1 to 21 (MKVKVLSLLVPALLVAGAANA).

It belongs to the Gram-negative porin family. In terms of assembly, homotrimer.

It is found in the cell outer membrane. Forms pores that allow passive diffusion of small molecules across the outer membrane. This is Outer membrane porin C (ompC) from Salmonella typhimurium (strain LT2 / SGSC1412 / ATCC 700720).